A 405-amino-acid polypeptide reads, in one-letter code: BRCA1-A complex subunit Abraxas 1 (405 aa).

One can recognise an MPN domain in the interval 7–153; that stretch reads SALLSGFVFG…CSTYRLEHAL (147 aa). Residues 208 to 262 adopt a coiled-coil conformation; sequence SLQEVHKINEMYATLQEELKKMCSDVEVSERSVEKLLTEVSQLKEEINRKKQHKI. The segment at 365–405 is disordered; that stretch reads LHQDEEDCNQETKLALSSAETDEEALENPKDTNEYSYSPTF. At S402 the chain carries Phosphoserine. The pSXXF motif motif lies at 402 to 405; it reads SPTF.

It belongs to the FAM175 family. Abraxas subfamily. Component of the BRCA1-A complex. Component of the BRISC complex. Homodimer. Interacts directly (when phosphorylated at Ser-402) with BRCA1. The phosphorylated homodimer can interact directly with two BRCA1 chains, giving rise to a heterotetramer. Phosphorylation of Ser-402 of the pSXXF motif by ATM or ATR constitutes a specific recognition motif for the BRCT domain of BRCA1.

The protein localises to the nucleus. Its function is as follows. Involved in DNA damage response and double-strand break (DSB) repair. Component of the BRCA1-A complex, acting as a central scaffold protein that assembles the various components of the complex and mediates the recruitment of BRCA1. The BRCA1-A complex specifically recognizes 'Lys-63'-linked ubiquitinated histones H2A and H2AX at DNA lesion sites, leading to target the BRCA1-BARD1 heterodimer to sites of DNA damage at DSBs. This complex also possesses deubiquitinase activity that specifically removes 'Lys-63'-linked ubiquitin on histones H2A and H2AX. The sequence is that of BRCA1-A complex subunit Abraxas 1 from Gallus gallus (Chicken).